The sequence spans 381 residues: MKRLTILGSTGSIGTQTLDIVRQNPEQLEVFALAAGKNVQEIELQAREFKPQIIGLMEEKAARELKQRVADLDIEVVSGMEGLLRTVTDEVPDTVVTAISGRIGLEPTMEALKAGKDIALANKETLVAGGDLVMGTAQRLGRTILPVDSEHSAIFQCLEEDPRTLDKIILTASGGPFRGWSEEQLREVTPERALQHPNWAMGAKITIDSATMMNKGLEVIEAHHLFNMEYDQIDVLIHPQSVIHSMVQYCDGSVLAQCGRPDMRLPIQYALTYPTRWPNPFERLDLRGKTLSFFDPEDYDFPALKLAYACGKRGGTLPAVMNAANEVAVHAFLARRVAYLEIIGLVDKVCSEHDVLDATDLETILNADHWARIRTEELIHS.

NADPH is bound by residues Thr10, Gly11, Ser12, Ile13, Gly36, Lys37, Asn38, and Asn122. Lys123 is a 1-deoxy-D-xylulose 5-phosphate binding site. Glu124 lines the NADPH pocket. Asp148 provides a ligand contact to Mn(2+). 4 residues coordinate 1-deoxy-D-xylulose 5-phosphate: Ser149, Glu150, Ser173, and His196. Position 150 (Glu150) interacts with Mn(2+). Gly202 is a binding site for NADPH. Residues Ser209, Asn214, Lys215, and Glu218 each contribute to the 1-deoxy-D-xylulose 5-phosphate site. Glu218 contacts Mn(2+).

It belongs to the DXR family. The cofactor is Mg(2+). Mn(2+) is required as a cofactor.

The enzyme catalyses 2-C-methyl-D-erythritol 4-phosphate + NADP(+) = 1-deoxy-D-xylulose 5-phosphate + NADPH + H(+). It functions in the pathway isoprenoid biosynthesis; isopentenyl diphosphate biosynthesis via DXP pathway; isopentenyl diphosphate from 1-deoxy-D-xylulose 5-phosphate: step 1/6. Functionally, catalyzes the NADPH-dependent rearrangement and reduction of 1-deoxy-D-xylulose-5-phosphate (DXP) to 2-C-methyl-D-erythritol 4-phosphate (MEP). This is 1-deoxy-D-xylulose 5-phosphate reductoisomerase from Desulfitobacterium hafniense (strain DSM 10664 / DCB-2).